The primary structure comprises 312 residues: Signal peptidase I (312 aa).

The helical transmembrane segment at 7 to 27 threads the bilayer; it reads IFLLTSTFFTGILWIIDHILL. The Cytoplasmic segment spans residues 28–63; that stretch reads IKNYFYNKKKTKNNNTILINKVILENKKCFFRSLSS. Residues 64–84 traverse the membrane as a helical segment; it reads LFPTFFIVFIIRSFIYEPFQI. The Extracellular segment spans residues 85-312; that stretch reads PSGSMMPTLL…IRIKRIGNIY (228 aa). Catalysis depends on residues serine 88 and lysine 142.

The protein belongs to the peptidase S26 family.

The protein resides in the cell membrane. It carries out the reaction Cleavage of hydrophobic, N-terminal signal or leader sequences from secreted and periplasmic proteins.. The chain is Signal peptidase I (lepB) from Buchnera aphidicola subsp. Schizaphis graminum (strain Sg).